Consider the following 268-residue polypeptide: Shikimate dehydrogenase (NADP(+)) (268 aa).

Shikimate is bound by residues 14–16 (SKS) and threonine 61. Residue lysine 65 is the Proton acceptor of the active site. Asparagine 86 and aspartate 102 together coordinate shikimate. NADP(+) contacts are provided by residues 126-130 (GAGGA), 149-154 (NRTFSK), and methionine 213. Tyrosine 215 serves as a coordination point for shikimate. Glycine 238 contacts NADP(+).

This sequence belongs to the shikimate dehydrogenase family. Homodimer.

It carries out the reaction shikimate + NADP(+) = 3-dehydroshikimate + NADPH + H(+). Its pathway is metabolic intermediate biosynthesis; chorismate biosynthesis; chorismate from D-erythrose 4-phosphate and phosphoenolpyruvate: step 4/7. Its function is as follows. Involved in the biosynthesis of the chorismate, which leads to the biosynthesis of aromatic amino acids. Catalyzes the reversible NADPH linked reduction of 3-dehydroshikimate (DHSA) to yield shikimate (SA). This chain is Shikimate dehydrogenase (NADP(+)), found in Haemophilus influenzae (strain PittEE).